A 353-amino-acid polypeptide reads, in one-letter code: MPRAQLPEDSSAVDMDILFPLDSVIGTELCPSPIPQIIHFVLFVVFSLVILIILRLYIPREPSSVPPREEDSENDQAEVGEWLRIGNKYITLKDYRILLKELENLEIYTFLSKKCLKKLSREGSSHHLPRQVRPGPVYKPAPARNHRPRGGRGKASPTSFHVSPRAPLAPLASMPSSVPKTSVESLGSPSSLSSSKPREPLCPLKHPSHQPPASTLSPNPTSSTESLGYLSSLSSSQPPEPLRPLKHPSHKPRGRSLPRRRNPGWVSWSDSMQADSETDTIICPMCKAPERSCPHTWWVPSSPRVIRGVGRCSDPNLGLSWRQEAARAWCHCTSSQFPFKHPNLPTHLPKASF.

The helical transmembrane segment at 34-54 (IPQIIHFVLFVVFSLVILIIL) threads the bilayer. Residues 122–271 (EGSSHHLPRQ…NPGWVSWSDS (150 aa)) form a disordered region. Low complexity predominate over residues 182–195 (SVESLGSPSSLSSS). Polar residues predominate over residues 211–221 (PPASTLSPNPT). The segment covering 222-237 (SSTESLGYLSSLSSSQ) has biased composition (low complexity). A compositionally biased stretch (basic residues) spans 244–262 (PLKHPSHKPRGRSLPRRRN).

The protein belongs to the SPATA31 family.

It localises to the membrane. The polypeptide is Putative protein SPATA31J1 (Homo sapiens (Human)).